Here is a 444-residue protein sequence, read N- to C-terminus: Probable ribonuclease FAU-1 (444 aa).

The protein belongs to the FAU-1 family.

Its function is as follows. Probable RNase involved in rRNA stability through maturation and/or degradation of precursor rRNAs. Binds to RNA in loop regions with AU-rich sequences. The protein is Probable ribonuclease FAU-1 of Pyrobaculum arsenaticum (strain DSM 13514 / JCM 11321 / PZ6).